We begin with the raw amino-acid sequence, 427 residues long: Glutamate-1-semialdehyde 2,1-aminomutase (427 aa).

N6-(pyridoxal phosphate)lysine is present on Lys-263.

The protein belongs to the class-III pyridoxal-phosphate-dependent aminotransferase family. HemL subfamily. In terms of assembly, homodimer. The cofactor is pyridoxal 5'-phosphate.

Its subcellular location is the cytoplasm. It catalyses the reaction (S)-4-amino-5-oxopentanoate = 5-aminolevulinate. It participates in porphyrin-containing compound metabolism; protoporphyrin-IX biosynthesis; 5-aminolevulinate from L-glutamyl-tRNA(Glu): step 2/2. This is Glutamate-1-semialdehyde 2,1-aminomutase from Caldicellulosiruptor saccharolyticus (strain ATCC 43494 / DSM 8903 / Tp8T 6331).